We begin with the raw amino-acid sequence, 244 residues long: MMNHTPLLLGIRERLIFALDVPSRTQALEWIDQLGDAISFYKIGMELLASGEYFQVLDDLASRGKRVFVDLKFFDIPATVAGVIRRLSQWPISYCTIHGWHAPMMQAATEANTSNMHLLAVTVLTSMTREDLAKMGINREPVDVVVERALAAHMAGMSGVIASGQEAAAIRHAIGSGFSIVCPGIRTNHVPHNDQQRTIGIKAAFANGADAIVVGRPIRMAQDPQAAAEAMQTEIMTALTEPST.

Substrate contacts are provided by residues aspartate 20, lysine 42, 70–79 (DLKFFDIPAT), threonine 125, arginine 186, glutamine 195, glycine 215, and arginine 216. The Proton donor role is filled by lysine 72.

Belongs to the OMP decarboxylase family. Type 1 subfamily. In terms of assembly, homodimer.

The enzyme catalyses orotidine 5'-phosphate + H(+) = UMP + CO2. It functions in the pathway pyrimidine metabolism; UMP biosynthesis via de novo pathway; UMP from orotate: step 2/2. Functionally, catalyzes the decarboxylation of orotidine 5'-monophosphate (OMP) to uridine 5'-monophosphate (UMP). The chain is Orotidine 5'-phosphate decarboxylase from Xylella fastidiosa (strain M23).